Here is a 91-residue protein sequence, read N- to C-terminus: Cell division topological specificity factor (91 aa).

This sequence belongs to the MinE family.

Its function is as follows. Prevents the cell division inhibition by proteins MinC and MinD at internal division sites while permitting inhibition at polar sites. This ensures cell division at the proper site by restricting the formation of a division septum at the midpoint of the long axis of the cell. The sequence is that of Cell division topological specificity factor from Thermoanaerobacter pseudethanolicus (strain ATCC 33223 / 39E) (Clostridium thermohydrosulfuricum).